The chain runs to 758 residues: MVRTKNQSSSSSASSSSTKSPIKSSSGAGSSGGGVGGRQSTHRSSSASNVAAVVAGGSSAAGGGSSSNRRSPGSSPDGDDDTTTTDDLTPTTCSPRSGHHHSYGGYSSSVHKQNLYVVSFPIIFLFNVLRSLIYQLFCIFRYLYGASTKVIYRPHRRDCNIEIVVQNSSKEQQQSLNHPSELNREGDGQEQQLSNQPQRFRPIQPLEMAANRPGGGYSPGPGDPLLAKQKHHHRRAFEYISKALKIDEENEGHKELAIELYRKGIKELEDGIAVDCWSGRGDVWDRAQRLHDKMQTNLSMARDRLHFLALREQDLQMQRLSLKEKQKEEARSKPQKTREPMLAGMTNEPMKLRVRSSGYGPKATTSAQPTASGRKLTIGSKRPVNLAVANKSQTLPRNLGSKTSVGAVQRQPAKTAATPPAVRRQFSSGRNTPPQRSRTPINNNGPSGSGASTPVVSVKGVEQKLVQLILDEIVEGGAKVEWTDIAGQDVAKQALQEMVILPSVRPELFTGLRAPAKGLLLFGPPGNGKTLLARAVATECSATFLNISAASLTSKYVGDGEKLVRALFAVARHMQPSIIFIDEVDSLLSERSSSEHEASRRLKTEFLVEFDGLPGNPDGDRIVVLAATNRPQELDEAALRRFTKRVYVSLPDEQTRELLLNRLLQKQGSPLDTEALRRLAKITDGYSGSDLTALAKDAALEPIRELNVEQVKCLDISAMRAITEQDFHSSLKRIRRSVAPQSLNSYEKWSQDYGDITI.

The tract at residues 1–103 (MVRTKNQSSS…SPRSGHHHSY (103 aa)) is disordered. Topologically, residues 1–121 (MVRTKNQSSS…KQNLYVVSFP (121 aa)) are cytoplasmic. The segment at 1–210 (MVRTKNQSSS…RPIQPLEMAA (210 aa)) is required for localization to punctate cytoplasmic foci. Low complexity-rich tracts occupy residues 8–28 (SSSSSASSSSTKSPIKSSSGA), 43–58 (RSSSASNVAAVVAGGS), 66–76 (SSNRRSPGSSP), and 85–95 (TDDLTPTTCSP). The segment at residues 122–142 (IIFLFNVLRSLIYQLFCIFRY) is an intramembrane region (helical). The Cytoplasmic segment spans residues 143–758 (LYGASTKVIY…WSQDYGDITI (616 aa)). Polar residues-rich tracts occupy residues 169 to 180 (SKEQQQSLNHPS) and 189 to 198 (QEQQLSNQPQ). Residues 169–202 (SKEQQQSLNHPSELNREGDGQEQQLSNQPQRFRP) form a disordered region. The interval 208–758 (MAANRPGGGY…WSQDYGDITI (551 aa)) is sufficient for interaction with microtubules and microtubule severing. Residues 233 to 308 (HRRAFEYISK…SMARDRLHFL (76 aa)) form the MIT domain. The segment at 353–454 (RVRSSGYGPK…GPSGSGASTP (102 aa)) is disordered. Polar residues-rich tracts occupy residues 390–406 (NKSQTLPRNLGSKTSVG) and 425–454 (QFSSGRNTPPQRSRTPINNNGPSGSGASTP). The required for interaction with microtubules stretch occupies residues 443–455 (NNGPSGSGASTPV). 523–530 (GPPGNGKT) lines the ATP pocket.

This sequence belongs to the AAA ATPase family. Spastin subfamily. As to quaternary structure, homohexamer. The homohexamer is stabilized by ATP-binding. The homohexamer may adopt a ring conformation through which microtubules pass prior to being severed. Interacts with microtubules. Interacts with atl; may be involved in microtubule dynamics.

It is found in the membrane. The protein localises to the cytoplasm. It localises to the cytoskeleton. Its subcellular location is the microtubule organizing center. The protein resides in the centrosome. It is found in the chromosome. The protein localises to the lipid droplet. The catalysed reaction is n ATP + n H2O + a microtubule = n ADP + n phosphate + (n+1) alpha/beta tubulin heterodimers.. Its function is as follows. ATP-dependent microtubule severing protein. Stimulates microtubule minus-end depolymerization and poleward microtubule flux in the mitotic spindle. Regulates microtubule stability in the neuromuscular junction synapse. Involved in lipid metabolism by regulating the size and distribution of lipid droplets. Involved in axon regeneration by regulating microtubule severing. The polypeptide is Spastin (Drosophila sechellia (Fruit fly)).